Consider the following 104-residue polypeptide: Cell division protein FtsL (104 aa).

Residues Met1 to Lys20 lie on the Cytoplasmic side of the membrane. Residues Trp21 to Ser43 form a helical membrane-spanning segment. The Periplasmic segment spans residues Arg44–Pro104.

The protein belongs to the FtsL family. Part of a complex composed of FtsB, FtsL and FtsQ.

It localises to the cell inner membrane. In terms of biological role, essential cell division protein. May link together the upstream cell division proteins, which are predominantly cytoplasmic, with the downstream cell division proteins, which are predominantly periplasmic. The polypeptide is Cell division protein FtsL (Shewanella oneidensis (strain ATCC 700550 / JCM 31522 / CIP 106686 / LMG 19005 / NCIMB 14063 / MR-1)).